The following is a 369-amino-acid chain: Glutamate 5-kinase (369 aa).

Lysine 9 provides a ligand contact to ATP. Positions 49, 136, and 148 each coordinate substrate. Residues 168–169 (TD) and 210–216 (TGGMLTK) each bind ATP. The PUA domain maps to 275–355 (QGSIWVDKGA…KGVLIYRDDW (81 aa)).

Belongs to the glutamate 5-kinase family.

The protein localises to the cytoplasm. The enzyme catalyses L-glutamate + ATP = L-glutamyl 5-phosphate + ADP. It functions in the pathway amino-acid biosynthesis; L-proline biosynthesis; L-glutamate 5-semialdehyde from L-glutamate: step 1/2. In terms of biological role, catalyzes the transfer of a phosphate group to glutamate to form L-glutamate 5-phosphate. This is Glutamate 5-kinase from Streptococcus pneumoniae (strain Hungary19A-6).